The chain runs to 296 residues: Formamidopyrimidine-DNA glycosylase (296 aa).

The active-site Schiff-base intermediate with DNA is proline 2. The active-site Proton donor is glutamate 3. Lysine 58 (proton donor; for beta-elimination activity) is an active-site residue. Histidine 104, arginine 126, and lysine 169 together coordinate DNA. The segment at serine 260–lysine 296 adopts an FPG-type zinc-finger fold. Residue arginine 286 is the Proton donor; for delta-elimination activity of the active site.

It belongs to the FPG family. Monomer. The cofactor is Zn(2+).

The catalysed reaction is Hydrolysis of DNA containing ring-opened 7-methylguanine residues, releasing 2,6-diamino-4-hydroxy-5-(N-methyl)formamidopyrimidine.. The enzyme catalyses 2'-deoxyribonucleotide-(2'-deoxyribose 5'-phosphate)-2'-deoxyribonucleotide-DNA = a 3'-end 2'-deoxyribonucleotide-(2,3-dehydro-2,3-deoxyribose 5'-phosphate)-DNA + a 5'-end 5'-phospho-2'-deoxyribonucleoside-DNA + H(+). In terms of biological role, involved in base excision repair of DNA damaged by oxidation or by mutagenic agents. Acts as a DNA glycosylase that recognizes and removes damaged bases. Has a preference for oxidized purines, such as 7,8-dihydro-8-oxoguanine (8-oxoG). Has AP (apurinic/apyrimidinic) lyase activity and introduces nicks in the DNA strand. Cleaves the DNA backbone by beta-delta elimination to generate a single-strand break at the site of the removed base with both 3'- and 5'-phosphates. This chain is Formamidopyrimidine-DNA glycosylase, found in Sinorhizobium fredii (strain NBRC 101917 / NGR234).